Here is a 34-residue protein sequence, read N- to C-terminus: Trypsin inhibitor 1 (34 aa).

The cyclopeptide (Ser-Gly) cross-link spans 1 to 34 (SGSDGGVCPKILQRCRRDSDCPGACICRGNGYCG). 3 disulfide bridges follow: cysteine 8–cysteine 25, cysteine 15–cysteine 27, and cysteine 21–cysteine 33.

In terms of processing, this is a cyclic peptide.

It localises to the secreted. Functionally, inhibits trypsin; probably participates in a plant defense mechanism. This chain is Trypsin inhibitor 1, found in Momordica cochinchinensis (Spiny bitter cucumber).